Here is a 91-residue protein sequence, read N- to C-terminus: MHCLRAIVKGKVQGVYFRDFTRTQATRLGLCGYAKNLANGAEVEVVAEGDKDALLEFLNLLRSGPPRAEVKDVETGWETATANYSDFRIKH.

Residues 3–91 (CLRAIVKGKV…ANYSDFRIKH (89 aa)) enclose the Acylphosphatase-like domain. Active-site residues include R18 and N36.

The protein belongs to the acylphosphatase family.

The catalysed reaction is an acyl phosphate + H2O = a carboxylate + phosphate + H(+). The polypeptide is Acylphosphatase (acyP) (Dehalococcoides mccartyi (strain ATCC BAA-2100 / JCM 16839 / KCTC 5957 / BAV1)).